Consider the following 480-residue polypeptide: Putative auxin transporter-like protein 4 (480 aa).

The Cytoplasmic segment spans residues 1 to 66 (MASEKVETIV…DAWFSCASNQ (66 aa)). A helical transmembrane segment spans residues 67–84 (VAQVLLTLPYSFSQLGMA). Topologically, residues 85 to 86 (SG) are extracellular. A helical transmembrane segment spans residues 87 to 107 (VAFQVFYGLMGSWTAYLISVL). The Cytoplasmic portion of the chain corresponds to 108 to 143 (YVEYRTRRERDKVDFRNHVIQWFEVLDGLLGRHWRN). The helical transmembrane segment at 144-164 (AGLLFNCTFLLFGSVIQLIAC) threads the bilayer. Topologically, residues 165–179 (ASNIYYINDRLDKRT) are extracellular. The helical transmembrane segment at 180–200 (WTYIFGACCATTVFVPSFHNY) threads the bilayer. Residues 201–203 (RVW) lie on the Cytoplasmic side of the membrane. Residues 204–224 (SFLGLLMTSYTAWYLTVAAVV) form a helical membrane-spanning segment. At 225–241 (HGKVDGAAPRAGPSKTM) the chain is on the extracellular side. A helical membrane pass occupies residues 242–262 (VLYFTGATNILYTFGGHAVTV). Topologically, residues 263 to 275 (EIMHAMWRPRRFK) are cytoplasmic. Residues 276-296 (MIYLAATAYVLTLTLPSAAAM) form a helical membrane-spanning segment. Residues 297–323 (YWAFGDALLDHSNAFALLPRTPWRDAA) are Extracellular-facing. Residues 324–344 (VVLMLIHQFITFGFACTPLYF) form a helical membrane-spanning segment. Over 345-365 (VWEKAIGVHGGAGVLRRAAAR) the chain is Cytoplasmic. A helical transmembrane segment spans residues 366-386 (LPVVLPIWFLAVIFPFFGPIN). A topological domain (extracellular) is located at residue Ser-387. A helical transmembrane segment spans residues 388–408 (TVGSFLVSFTVYIIPAMAHMA). Residues 409-433 (TFAPAAARENAVEPPPRALGGWPGT) are Cytoplasmic-facing. Residues 434-454 (FAANCFVVAWVLVVGFGFGGW) form a helical membrane-spanning segment. The Extracellular portion of the chain corresponds to 455-480 (ASTVNFVRQVDTFGLFTKCYQCPPRH).

This sequence belongs to the amino acid/polyamine transporter 2 family. Amino acid/auxin permease (AAAP) (TC 2.A.18.1) subfamily.

The protein resides in the cell membrane. Functionally, carrier protein involved in proton-driven auxin influx. May mediate the formation of auxin gradient from developing leaves (site of auxin biosynthesis) to tips. In Oryza sativa subsp. japonica (Rice), this protein is Putative auxin transporter-like protein 4.